Here is a 93-residue protein sequence, read N- to C-terminus: Ribonuclease P protein component 1 (93 aa).

Belongs to the eukaryotic/archaeal RNase P protein component 1 family. In terms of assembly, consists of a catalytic RNA component and at least 4-5 protein subunits.

The protein resides in the cytoplasm. It carries out the reaction Endonucleolytic cleavage of RNA, removing 5'-extranucleotides from tRNA precursor.. Part of ribonuclease P, a protein complex that generates mature tRNA molecules by cleaving their 5'-ends. This is Ribonuclease P protein component 1 from Methanosphaera stadtmanae (strain ATCC 43021 / DSM 3091 / JCM 11832 / MCB-3).